A 72-amino-acid chain; its full sequence is MSKDDVIEVEGTVVEPLPNAMFRVELDNGHKVLAHVSGKIRMNFIRILPGDRVTVELSPYDLTRGRIIYRHK.

Residues 1–72 (MSKDDVIEVE…TRGRIIYRHK (72 aa)) form the S1-like domain.

The protein belongs to the IF-1 family. Component of the 30S ribosomal translation pre-initiation complex which assembles on the 30S ribosome in the order IF-2 and IF-3, IF-1 and N-formylmethionyl-tRNA(fMet); mRNA recruitment can occur at any time during PIC assembly.

The protein resides in the cytoplasm. In terms of biological role, one of the essential components for the initiation of protein synthesis. Stabilizes the binding of IF-2 and IF-3 on the 30S subunit to which N-formylmethionyl-tRNA(fMet) subsequently binds. Helps modulate mRNA selection, yielding the 30S pre-initiation complex (PIC). Upon addition of the 50S ribosomal subunit IF-1, IF-2 and IF-3 are released leaving the mature 70S translation initiation complex. This chain is Translation initiation factor IF-1, found in Carboxydothermus hydrogenoformans (strain ATCC BAA-161 / DSM 6008 / Z-2901).